The primary structure comprises 419 residues: UDP-N-acetylglucosamine 1-carboxyvinyltransferase 2 (419 aa).

24–25 (KN) is a phosphoenolpyruvate binding site. Residue arginine 94 coordinates UDP-N-acetyl-alpha-D-glucosamine. Cysteine 118 acts as the Proton donor in catalysis. The residue at position 118 (cysteine 118) is a 2-(S-cysteinyl)pyruvic acid O-phosphothioketal. Residues 123–127 (RPIDQ), aspartate 307, and isoleucine 329 contribute to the UDP-N-acetyl-alpha-D-glucosamine site.

This sequence belongs to the EPSP synthase family. MurA subfamily.

It localises to the cytoplasm. The catalysed reaction is phosphoenolpyruvate + UDP-N-acetyl-alpha-D-glucosamine = UDP-N-acetyl-3-O-(1-carboxyvinyl)-alpha-D-glucosamine + phosphate. It functions in the pathway cell wall biogenesis; peptidoglycan biosynthesis. Functionally, cell wall formation. Adds enolpyruvyl to UDP-N-acetylglucosamine. The protein is UDP-N-acetylglucosamine 1-carboxyvinyltransferase 2 of Staphylococcus aureus (strain bovine RF122 / ET3-1).